A 75-amino-acid chain; its full sequence is Small ribosomal subunit protein bS18c (75 aa).

The protein belongs to the bacterial ribosomal protein bS18 family. As to quaternary structure, part of the 30S ribosomal subunit.

The protein localises to the plastid. It is found in the chloroplast. This Marchantia polymorpha (Common liverwort) protein is Small ribosomal subunit protein bS18c (rps18).